Here is a 422-residue protein sequence, read N- to C-terminus: UDP-N-acetylglucosamine 1-carboxyvinyltransferase (422 aa).

Position 22-23 (22-23) interacts with phosphoenolpyruvate; sequence KN. Arg-95 provides a ligand contact to UDP-N-acetyl-alpha-D-glucosamine. Catalysis depends on Cys-119, which acts as the Proton donor. Cys-119 carries the 2-(S-cysteinyl)pyruvic acid O-phosphothioketal modification. UDP-N-acetyl-alpha-D-glucosamine is bound by residues 124–128, Asp-309, and Val-331; that span reads RPIDQ.

This sequence belongs to the EPSP synthase family. MurA subfamily.

It is found in the cytoplasm. It catalyses the reaction phosphoenolpyruvate + UDP-N-acetyl-alpha-D-glucosamine = UDP-N-acetyl-3-O-(1-carboxyvinyl)-alpha-D-glucosamine + phosphate. The protein operates within cell wall biogenesis; peptidoglycan biosynthesis. In terms of biological role, cell wall formation. Adds enolpyruvyl to UDP-N-acetylglucosamine. The chain is UDP-N-acetylglucosamine 1-carboxyvinyltransferase from Anaeromyxobacter dehalogenans (strain 2CP-1 / ATCC BAA-258).